The following is a 157-amino-acid chain: Deoxyuridine 5'-triphosphate nucleotidohydrolase (157 aa).

Substrate-binding positions include 73 to 75 (RSG), Asn-86, and 90 to 92 (TID).

The protein belongs to the dUTPase family. Mg(2+) is required as a cofactor.

It carries out the reaction dUTP + H2O = dUMP + diphosphate + H(+). It participates in pyrimidine metabolism; dUMP biosynthesis; dUMP from dCTP (dUTP route): step 2/2. In terms of biological role, this enzyme is involved in nucleotide metabolism: it produces dUMP, the immediate precursor of thymidine nucleotides and it decreases the intracellular concentration of dUTP so that uracil cannot be incorporated into DNA. The sequence is that of Deoxyuridine 5'-triphosphate nucleotidohydrolase from Azorhizobium caulinodans (strain ATCC 43989 / DSM 5975 / JCM 20966 / LMG 6465 / NBRC 14845 / NCIMB 13405 / ORS 571).